A 566-amino-acid chain; its full sequence is Transcription factor tasR (566 aa).

Residues 1 to 30 (MISASRMEESASSSSLSDAAAPPPGAALQS) show a composition bias toward low complexity. Residues 1 to 31 (MISASRMEESASSSSLSDAAAPPPGAALQSI) form a disordered region. Positions 35–68 (CDRCRFHKLKCNVPAAGHGGPVPCERCTRAKVPC) form a DNA-binding region, zn(2)-C6 fungal-type. Disordered regions lie at residues 72–174 (RRRR…PGQH), 346–382 (EFIV…GGDD), 422–453 (SESD…TGTA), and 500–551 (RGVG…GLGG). 2 stretches are compositionally biased toward low complexity: residues 89 to 108 (PTRR…TSAA) and 359 to 378 (SESS…NNEA). The segment covering 501–532 (GVGGGGGGGGGGGGGGGGGVGGGGGGGGGPGG) has biased composition (gly residues).

It localises to the nucleus. Functionally, transcription factor that regulates the expression of the gene cluster that mediates the biosynthesis of the tetramic acids Sch210971 and Sch210972, potential anti-HIV fungal natural product that contain a decalin core. This Hapsidospora irregularis protein is Transcription factor tasR.